The sequence spans 931 residues: Isoleucine--tRNA ligase (931 aa).

The 'HIGH' region motif lies at 57–67 (PYANGNIHIGH). Glu555 contacts L-isoleucyl-5'-AMP. The 'KMSKS' region signature appears at 596–600 (KMSKS). Residue Lys599 coordinates ATP. 4 residues coordinate Zn(2+): Cys890, Cys893, Cys910, and Cys913.

It belongs to the class-I aminoacyl-tRNA synthetase family. IleS type 1 subfamily. As to quaternary structure, monomer. Requires Zn(2+) as cofactor.

The protein resides in the cytoplasm. It carries out the reaction tRNA(Ile) + L-isoleucine + ATP = L-isoleucyl-tRNA(Ile) + AMP + diphosphate. Functionally, catalyzes the attachment of isoleucine to tRNA(Ile). As IleRS can inadvertently accommodate and process structurally similar amino acids such as valine, to avoid such errors it has two additional distinct tRNA(Ile)-dependent editing activities. One activity is designated as 'pretransfer' editing and involves the hydrolysis of activated Val-AMP. The other activity is designated 'posttransfer' editing and involves deacylation of mischarged Val-tRNA(Ile). This Limosilactobacillus reuteri subsp. reuteri (strain JCM 1112) (Lactobacillus reuteri) protein is Isoleucine--tRNA ligase.